The primary structure comprises 580 residues: PTS system fructose-specific EIIB'BC component (580 aa).

2 consecutive PTS EIIB type-2 domains span residues 3-100 (MKIA…QAAE) and 124-221 (KKIV…NAFA). Residues cysteine 11 and cysteine 132 each act as phosphocysteine intermediate; for EIIB activity in the active site. Phosphocysteine; by EIIA is present on residues cysteine 11 and cysteine 132. The region spanning 244–579 (VYKHLMTGVS…KKSAQAKAVA (336 aa)) is the PTS EIIC type-2 domain. The next 9 membrane-spanning stretches (helical) occupy residues 254–274 (HMLP…VFGI), 292–312 (GGSA…FSIA), 322–342 (IGGM…VAGF), 367–387 (ILII…YVVG), 408–428 (NAIL…GGPV), 448–468 (MAAI…ATFI), 480–500 (AGKA…IPFA), 507–527 (VIPA…LFGA), and 537–557 (FVLL…AIAV).

Its subcellular location is the cell inner membrane. It catalyses the reaction D-fructose(out) + N(pros)-phospho-L-histidyl-[protein] = D-fructose 1-phosphate(in) + L-histidyl-[protein]. Functionally, the phosphoenolpyruvate-dependent sugar phosphotransferase system (sugar PTS), a major carbohydrate active transport system, catalyzes the phosphorylation of incoming sugar substrates concomitantly with their translocation across the cell membrane. The enzyme II FruAB PTS system is involved in fructose transport. In Vibrio cholerae serotype O1 (strain ATCC 39315 / El Tor Inaba N16961), this protein is PTS system fructose-specific EIIB'BC component.